Reading from the N-terminus, the 506-residue chain is AMP phosphorylase (506 aa).

Residues glycine 167, 193–198 (SRAITG), and threonine 202 each bind AMP. Aspartate 255 (proton donor) is an active-site residue. AMP is bound by residues serine 263 and lysine 287.

Belongs to the thymidine/pyrimidine-nucleoside phosphorylase family. Type 2 subfamily.

It catalyses the reaction AMP + phosphate = alpha-D-ribose 1,5-bisphosphate + adenine. It carries out the reaction CMP + phosphate = cytosine + alpha-D-ribose 1,5-bisphosphate. The enzyme catalyses UMP + phosphate = alpha-D-ribose 1,5-bisphosphate + uracil. Functionally, catalyzes the conversion of AMP and phosphate to adenine and ribose 1,5-bisphosphate (R15P). Exhibits phosphorylase activity toward CMP and UMP in addition to AMP. Functions in an archaeal AMP degradation pathway, together with R15P isomerase and RubisCO. The chain is AMP phosphorylase from Methanosarcina barkeri (strain Fusaro / DSM 804).